The chain runs to 524 residues: Glutamyl-tRNA(Gln) amidotransferase subunit A, mitochondrial (524 aa).

Active-site charge relay system residues include Lys-76 and Ser-171. Catalysis depends on Ser-195, which acts as the Acyl-ester intermediate.

It belongs to the amidase family. GatA subfamily. In terms of assembly, subunit of the heterotrimeric GatCAB amidotransferase (AdT) complex, composed of A (qrsl1), B (gatb) and C (gatc) subunits.

The protein resides in the mitochondrion. The catalysed reaction is L-glutamyl-tRNA(Gln) + L-glutamine + ATP + H2O = L-glutaminyl-tRNA(Gln) + L-glutamate + ADP + phosphate + H(+). Its function is as follows. Allows the formation of correctly charged Gln-tRNA(Gln) through the transamidation of misacylated Glu-tRNA(Gln) in the mitochondria. The reaction takes place in the presence of glutamine and ATP through an activated gamma-phospho-Glu-tRNA(Gln). The chain is Glutamyl-tRNA(Gln) amidotransferase subunit A, mitochondrial (qrsl1) from Xenopus laevis (African clawed frog).